We begin with the raw amino-acid sequence, 122 residues long: Small ribosomal subunit protein uS13 (122 aa).

The tract at residues 99 to 122 (RGQRTHTNARTRKGPAKAIAGKKK) is disordered.

The protein belongs to the universal ribosomal protein uS13 family. In terms of assembly, part of the 30S ribosomal subunit. Forms a loose heterodimer with protein S19. Forms two bridges to the 50S subunit in the 70S ribosome.

Its function is as follows. Located at the top of the head of the 30S subunit, it contacts several helices of the 16S rRNA. In the 70S ribosome it contacts the 23S rRNA (bridge B1a) and protein L5 of the 50S subunit (bridge B1b), connecting the 2 subunits; these bridges are implicated in subunit movement. Contacts the tRNAs in the A and P-sites. The protein is Small ribosomal subunit protein uS13 of Rhizobium etli (strain CIAT 652).